A 360-amino-acid chain; its full sequence is Protein RecA (360 aa).

Residue 77-84 participates in ATP binding; the sequence is GPESSGKT.

This sequence belongs to the RecA family.

It is found in the cytoplasm. Can catalyze the hydrolysis of ATP in the presence of single-stranded DNA, the ATP-dependent uptake of single-stranded DNA by duplex DNA, and the ATP-dependent hybridization of homologous single-stranded DNAs. It interacts with LexA causing its activation and leading to its autocatalytic cleavage. The sequence is that of Protein RecA from Chelativorans sp. (strain BNC1).